The chain runs to 226 residues: Ribosomal RNA small subunit methyltransferase G (226 aa).

Residues glycine 86, leucine 91, 137 to 138, and arginine 150 each bind S-adenosyl-L-methionine; that span reads VE.

This sequence belongs to the methyltransferase superfamily. RNA methyltransferase RsmG family.

It localises to the cytoplasm. The catalysed reaction is guanosine(527) in 16S rRNA + S-adenosyl-L-methionine = N(7)-methylguanosine(527) in 16S rRNA + S-adenosyl-L-homocysteine. Its function is as follows. Specifically methylates the N7 position of guanine in position 527 of 16S rRNA. This Polaromonas sp. (strain JS666 / ATCC BAA-500) protein is Ribosomal RNA small subunit methyltransferase G.